A 334-amino-acid chain; its full sequence is MIKAFLIERRSWIAAFLFQQALMLFIAFVDPSISFGNVLYMVYLCILFFIIFLWFRYRKETAFYKSLKTWENNLDVTAINEPETPFEAMVERSIAGQTEHLKQTAARHRLALENEKDELMAWIHEVKTPLTAMHLIIDRMEEKALKSQLSYEWLRIHLLLDQQLHQKRISFIENDLSVEFIQLQPLIFKEIKDLQSWCIQKGIGFDIQLEAKEVLSDAKWLAFIIRQLLTNAVKYSEASEIEIKSFQKGEQTQLQVKDCGRGIDPKDVPRIFDKGFTSTTDHHDQASTGMGLYLAKKAAAPLLIHIDVESEFGAGTVFTLTFPIRNQFEHVISV.

Residues Met-1 to Trp-12 lie on the Cytoplasmic side of the membrane. A helical transmembrane segment spans residues Ile-13 to Ile-33. Residue Ser-34 is a topological domain, extracellular. Residues Phe-35 to Phe-55 traverse the membrane as a helical segment. The Cytoplasmic portion of the chain corresponds to Arg-56–Val-334. The Histidine kinase domain maps to Ala-121 to Asn-326. His-124 is subject to Phosphohistidine; by autocatalysis.

The protein localises to the cell membrane. The catalysed reaction is ATP + protein L-histidine = ADP + protein N-phospho-L-histidine.. In terms of biological role, member of the two-component regulatory system BceS/BceR involved in the regulation of bacitracin resistance. Activates BceR in response to extracellular bacitracin. This Bacillus subtilis (strain 168) protein is Sensor protein BceS (bceS).